Reading from the N-terminus, the 1342-residue chain is DNA-directed RNA polymerase subunit beta (1342 aa).

Belongs to the RNA polymerase beta chain family. In terms of assembly, the RNAP catalytic core consists of 2 alpha, 1 beta, 1 beta' and 1 omega subunit. When a sigma factor is associated with the core the holoenzyme is formed, which can initiate transcription.

The catalysed reaction is RNA(n) + a ribonucleoside 5'-triphosphate = RNA(n+1) + diphosphate. Functionally, DNA-dependent RNA polymerase catalyzes the transcription of DNA into RNA using the four ribonucleoside triphosphates as substrates. This Salmonella typhi protein is DNA-directed RNA polymerase subunit beta.